Reading from the N-terminus, the 451-residue chain is Phosphoglucosamine mutase (451 aa).

S107 functions as the Phosphoserine intermediate in the catalytic mechanism. 4 residues coordinate Mg(2+): S107, D246, D248, and D250. S107 is subject to Phosphoserine.

Belongs to the phosphohexose mutase family. Mg(2+) is required as a cofactor. In terms of processing, activated by phosphorylation.

The enzyme catalyses alpha-D-glucosamine 1-phosphate = D-glucosamine 6-phosphate. In terms of biological role, catalyzes the conversion of glucosamine-6-phosphate to glucosamine-1-phosphate. This Burkholderia ambifaria (strain ATCC BAA-244 / DSM 16087 / CCUG 44356 / LMG 19182 / AMMD) (Burkholderia cepacia (strain AMMD)) protein is Phosphoglucosamine mutase.